A 140-amino-acid chain; its full sequence is Hemoglobin subunit beta (140 aa).

The Globin domain maps to G1–H140. 2 residues coordinate heme b: H57 and H86.

The protein belongs to the globin family. Heterotetramer of either two alpha-B chains or two alpha-C chains and two beta chains.

In terms of biological role, the beta chain is a component of adult hemoglobins B. And C. The chain is Hemoglobin subunit beta (HBB) from Aquarana catesbeiana (American bullfrog).